The chain runs to 1054 residues: Proteoglycan 4 (1054 aa).

An N-terminal signal peptide occupies residues 1 to 24; sequence MGWKILPVCLSLLLPVVLIQQVSS. 2 consecutive SMB domains span residues 26–69 and 66–108; these read DLSS…PELS and PELS…EEVH. Disulfide bonds link Cys-30–Cys-34, Cys-30–Cys-46, Cys-34–Cys-64, Cys-44–Cys-46, Cys-44–Cys-57, Cys-50–Cys-56, Cys-57–Cys-64, Cys-70–Cys-74, Cys-70–Cys-86, Cys-74–Cys-104, Cys-84–Cys-86, Cys-84–Cys-97, Cys-90–Cys-96, and Cys-97–Cys-104. N-linked (GlcNAc...) asparagine glycosylation is present at Asn-109. Positions 110 to 125 are enriched in low complexity; sequence STSPSSKTAPTPAGAS. Positions 110–764 are disordered; the sequence is STSPSSKTAP…PLIPGPPVLF (655 aa). The O-linked (GalNAc...) serine glycan is linked to Ser-135. Low complexity predominate over residues 162–175; the sequence is QESSSSSSSSSSTI. The segment covering 188 to 200 has biased composition (basic and acidic residues); it reads ELQKNPNVKDNKK. The span at 229–238 shows a compositional bias: pro residues; the sequence is TPPPPDPPTT. Residues Thr-237 and Thr-250 are each glycosylated (O-linked (GalNAc...) threonine). Over residues 286–295 the composition is skewed to low complexity; sequence TTATNKQSSA. O-linked (GalNAc...) threonine glycosylation is present at Thr-301. Ser-302 carries an O-linked (GalNAc...) serine glycan. Residues 302–318 show a composition bias toward basic and acidic residues; it reads SVKETRSAEKTSDKDVE. Thr-306 carries O-linked (GalNAc...) threonine glycosylation. Ser-313 is a glycosylation site (O-linked (GalNAc...) serine). The 1; approximate repeat unit spans residues 317–324; that stretch reads VEPTSTTP. The interval 317–618 is 37 X 8 AA repeats of K-X-P-X-P-T-T-X; that stretch reads VEPTSTTPKN…TPKKPEPTTT (302 aa). A compositionally biased stretch (polar residues) spans 319 to 328; sequence PTSTTPKNSA. One copy of the 2; approximate repeat lies at 325 to 332; sequence KNSAPTTT. O-linked (GalNAc...) serine glycosylation occurs at Ser-327. A compositionally biased stretch (low complexity) spans 329 to 339; that stretch reads PTTTKKPVTTT. Residues Thr-330, Thr-338, Thr-354, Thr-362, Thr-369, Thr-377, Thr-378, Thr-385, Thr-386, Thr-393, and Thr-394 are each glycosylated (O-linked (GalNAc...) threonine). The stretch at 333–340 is one 3; approximate repeat; it reads KKPVTTTK. A 4; approximate repeat occupies 349 to 356; sequence QEPEPTTA. Repeat 5 spans residues 357–364; it reads KEPPPTTK. The span at 364-399 shows a compositional bias: basic and acidic residues; sequence KKPEPTTRKEPEPTTPKEPEPTTPKEPEPTTPKEPE. The 6; approximate repeat unit spans residues 365–371; sequence KPEPTTR. 5 repeat units span residues 372 to 379, 380 to 387, 388 to 395, 396 to 403, and 404 to 411. Residues 400–426 are compositionally biased toward pro residues; it reads PTTPKEPPPTTKKPEPTTPKEPGPTTP. A 12; approximate repeat occupies 412–418; that stretch reads KPEPTTP. Thr-416, Thr-417, Thr-424, Thr-432, Thr-433, Thr-440, Thr-441, and Thr-448 each carry an O-linked (GalNAc...) threonine glycan. 3 repeat units span residues 419–426, 427–434, and 435–442. The segment covering 427–550 has biased composition (basic and acidic residues); sequence KEPEPTTTKE…PEPTTPKKPE (124 aa). The stretch at 443-450 is one 16; approximate repeat; it reads KEPESTTR. 21 repeat units span residues 451-458, 459-466, 467-474, 475-482, 483-490, 491-498, 499-506, 507-514, 515-522, 523-530, 531-538, 539-546, 547-554, 555-562, 563-570, 571-578, 579-586, 587-594, 595-602, 603-610, and 611-618. O-linked (GalNAc...) threonine glycosylation is found at Thr-472, Thr-480, Thr-481, Thr-488, Thr-489, Thr-496, Thr-497, Thr-504, Thr-505, Thr-512, Thr-520, Thr-521, Thr-528, and Thr-529. The segment covering 551-562 has biased composition (pro residues); that stretch reads PTTPKEPVPTTP. O-linked (GalNAc...) threonine glycans are attached at residues Thr-553, Thr-560, Thr-561, Thr-568, Thr-569, Thr-576, and Thr-577. Residues 563–614 are compositionally biased toward basic and acidic residues; that stretch reads KEPEPTTPKEPEPTTPKEPEPTTRKEPEPTTPKEPEPTTPKEPEPTTPKKPE. O-linked (GalNAc...) threonine glycans are attached at residues Thr-592, Thr-600, and Thr-601. Residues 615 to 624 are compositionally biased toward low complexity; the sequence is PTTTSPKTTT. Thr-622, Thr-624, Thr-628, Thr-629, and Thr-692 each carry an O-linked (GalNAc...) threonine glycan. Residues 672-699 are compositionally biased toward basic residues; that stretch reads KPTKKPTKAPKKPTSTKKPKTPKTRKPK. Residues 700–712 are compositionally biased toward low complexity; it reads TTPSPLKTTSATP. Over residues 713-735 the composition is skewed to polar residues; sequence ELNTTPLEVMLPTTTIPKQTPNP. Cys-795 and Cys-1053 form a disulfide bridge. Hemopexin repeat units lie at residues 797–840 and 841–888; these read GKPV…VWGI and PSPI…FGGL. An N-linked (GlcNAc...) asparagine glycan is attached at Asn-808. Residue Thr-810 is glycosylated (O-linked (GalNAc...) threonine). N-linked (GlcNAc...) asparagine glycosylation occurs at Asn-938.

In terms of assembly, homodimer; disulfide-linked. In terms of processing, N-glycosylated. O-glycosylated; contains glycosaminoglycan chondroitin sulfate and keratan sulfate. O-glycosylated with sialylated oligosaccharides which are predominantly represented by the monosialylated core type I structure, NeuNAcalpha2-3Galbeta1-3GalNAc, with smaller amounts of disialylated O-glycans. Post-translationally, the disulfide bond between Cys-795 and Cys-1053 is essential for protein cleavage. In terms of processing, proteolytically cleaved by cathepsin CTSG. As to expression, highly expressed in cartilage, bone and liver and weakly expressed in heart, brain and muscle. Expressed in the surface chondrocytes and in synovial intimal cells. Isoform B is expressed in bone, small intestine, muscle, testis, heart, liver and lung. Isoform C and isoform D are widely expressed.

It is found in the secreted. Plays a role in boundary lubrication within articulating joints. Prevents protein deposition onto cartilage from synovial fluid by controlling adhesion-dependent synovial growth and inhibiting the adhesion of synovial cells to the cartilage surface. The protein is Proteoglycan 4 (Prg4) of Mus musculus (Mouse).